The primary structure comprises 481 residues: Guanine nucleotide exchange factor C9orf72 homolog (481 aa).

The uDENN C9ORF72-type domain maps to 23-194; that stretch reads SPLLAATFAY…ELLASMRSHS (172 aa). A cDENN C9ORF72-type domain is found at 200–343; the sequence is DIADTVLNDD…SELTAFWRAT (144 aa). A dDENN C9ORF72-type domain is found at 370–464; that stretch reads VLHRDTLVKA…IKPGLHSFIF (95 aa). The required for the homodimerization of the C9orf72-SMCR8 complex stretch occupies residues 461–481; it reads SFIFGRPFYTSVQERDVLMTF.

In terms of assembly, component of the C9orf72-SMCR8 complex, at least composed of C9orf72, SMCR8 and WDR41. The complex is formed of two protomers, each individually consisting of one molecule each of C9orf72, SMCR8 and WDR41. The protomers homodimerize via an interaction between C9orf72 (via C-terminus) and SMCR8 (via N-terminus). Within each protomer SMCR8 (via DENN domain) acts as a bridging protein between WDR41 (via C-terminus and N-terminus) and C9orf72 (via C-terminus). The C9orf72-SMCR8 complex associates with the ULK1/ATG1 kinase complex. Interacts with ULK1/ATG1 kinase complex members ULK1, ATG13 and RB1CC1. Interacts with SMCR8; the interaction is direct. Interacts with HNRNPA1, HNRNPA2B1 and UBQLN2. Interacts with small Rab GTPase RAB1A; the interaction mediates recruitment of RAB1A to the ULK1/ATG1 kinase complex. Also interacts with small Rab GTPase RAB7A. Interacts with cofilin. Interacts with GTP-binding proteins ARF1 and ARF6. Interacts with the DLG4/PSD-95. Interacts with CARM1 (via PH domain-like fold). Interacts with RAB39A and RAB39B (in GDP-bound forms); functions as GEF for RAB39A and RAB39B.

It localises to the nucleus. It is found in the cytoplasm. Its subcellular location is the P-body. The protein resides in the stress granule. The protein localises to the endosome. It localises to the lysosome. It is found in the cytoplasmic vesicle. Its subcellular location is the autophagosome. The protein resides in the autolysosome. The protein localises to the secreted. It localises to the cell projection. It is found in the axon. Its subcellular location is the growth cone. The protein resides in the perikaryon. Acts as a guanine-nucleotide releasing factor (GEF) for Rab GTPases by promoting the conversion of inactive RAB-GDP to the active form RAB-GTP. Acts as a GEF for RAB39A which enables HOPS-mediated autophagosome-lysosome membrane tethering and fusion in mammalian autophagy. Component of the C9orf72-SMCR8 complex where both subunits display GEF activity and that regulates autophagy. As part of the C9orf72-SMCR8-WDR41 (CSW) complex, functions as GEF for RAB8A and RAB39B, thereby promoting autophagosome maturation. As part of the C9orf72-SMCR8 complex, also functions as GTPase activating protein (GAP) for RAB8A and RAB11A in vitro. The C9orf72-SMCR8 complex also acts as a regulator of autophagy initiation by interacting with the ULK1/ATG1 kinase complex and modulating its protein kinase activity. Promotes initiation of autophagy by regulating the RAB1A-dependent trafficking of the ULK1/ATG1 kinase complex to the phagophore which leads to autophagosome formation. Acts as a regulator of mTORC1 signaling by promoting phosphorylation of mTORC1 substrates. Plays a role in endosomal trafficking. May be involved in regulating the maturation of phagosomes to lysosomes. Promotes the lysosomal localization and lysosome-mediated degradation of CARM1 which leads to inhibition of starvation-induced lipid metabolism. Regulates actin dynamics in motor neurons by inhibiting the GTP-binding activity of ARF6, leading to ARF6 inactivation. This reduces the activity of the LIMK1 and LIMK2 kinases which are responsible for phosphorylation and inactivation of cofilin, leading to CFL1/cofilin activation. Positively regulates axon extension and axon growth cone size in spinal motor neurons. Required for SMCR8 protein expression and localization at pre- and post-synaptic compartments in the forebrain, also regulates protein abundance of RAB3A and GRIA1/GLUR1 in post-synaptic compartments in the forebrain and hippocampus. Plays a role within the hematopoietic system in restricting inflammation and the development of autoimmunity. The sequence is that of Guanine nucleotide exchange factor C9orf72 homolog from Rattus norvegicus (Rat).